A 368-amino-acid chain; its full sequence is Histidinol dehydrogenase (368 aa).

Residues Thr-197, Gln-218, and His-221 each contribute to the substrate site. The Zn(2+) site is built by Gln-218 and His-221. Active-site proton acceptor residues include Glu-276 and His-277. Residues His-277, Asp-306, Glu-358, and His-363 each contribute to the substrate site. Asp-306 is a binding site for Zn(2+). Residue His-363 participates in Zn(2+) binding.

This sequence belongs to the histidinol dehydrogenase family. Zn(2+) serves as cofactor.

It catalyses the reaction L-histidinol + 2 NAD(+) + H2O = L-histidine + 2 NADH + 3 H(+). The protein operates within amino-acid biosynthesis; L-histidine biosynthesis; L-histidine from 5-phospho-alpha-D-ribose 1-diphosphate: step 9/9. Functionally, catalyzes the sequential NAD-dependent oxidations of L-histidinol to L-histidinaldehyde and then to L-histidine. This chain is Histidinol dehydrogenase, found in Pyrobaculum aerophilum (strain ATCC 51768 / DSM 7523 / JCM 9630 / CIP 104966 / NBRC 100827 / IM2).